The primary structure comprises 209 residues: Glycine cleavage system H-like protein gcvH4 (209 aa).

A compositionally biased stretch (low complexity) spans 35-51 (NNNNNNNNNNNNNNNNN). The tract at residues 35 to 56 (NNNNNNNNNNNNNNNNNRNKKL) is disordered. The Lipoyl-binding domain occupies 73-159 (FATIGITNYV…KTTTTTTKIK (87 aa)).

The protein belongs to the GcvH family.

The chain is Glycine cleavage system H-like protein gcvH4 (gcvH4) from Dictyostelium discoideum (Social amoeba).